A 420-amino-acid chain; its full sequence is UDP-N-acetylglucosamine 1-carboxyvinyltransferase (420 aa).

Lys22–Asn23 serves as a coordination point for phosphoenolpyruvate. Arg91 lines the UDP-N-acetyl-alpha-D-glucosamine pocket. Cys115 (proton donor) is an active-site residue. Position 115 is a 2-(S-cysteinyl)pyruvic acid O-phosphothioketal (Cys115). UDP-N-acetyl-alpha-D-glucosamine-binding positions include Arg120–Leu124, Lys160–Val163, Asp305, and Ile327.

Belongs to the EPSP synthase family. MurA subfamily.

Its subcellular location is the cytoplasm. The catalysed reaction is phosphoenolpyruvate + UDP-N-acetyl-alpha-D-glucosamine = UDP-N-acetyl-3-O-(1-carboxyvinyl)-alpha-D-glucosamine + phosphate. It functions in the pathway cell wall biogenesis; peptidoglycan biosynthesis. Functionally, cell wall formation. Adds enolpyruvyl to UDP-N-acetylglucosamine. This chain is UDP-N-acetylglucosamine 1-carboxyvinyltransferase, found in Pectobacterium carotovorum subsp. carotovorum (strain PC1).